The sequence spans 497 residues: Zinc finger protein 3 (497 aa).

A compositionally biased stretch (basic and acidic residues) spans 1-20 (MGTEKKEGLPKEETSEDSKP). Positions 1–53 (MGTEKKEGLPKEETSEDSKPHGQTVEKLAQEVCHGHEFGEASEEDMSEGHLRE) are disordered. Residues lysine 6 and lysine 11 each participate in a glycyl lysine isopeptide (Lys-Gly) (interchain with G-Cter in SUMO2) cross-link. C2H2-type zinc fingers lie at residues 136–158 (HTCK…MRVH), 164–186 (FECK…QRIH), 192–214 (FACT…HRIH), 220–242 (YKCE…QRIH), 248–270 (YECN…QRIH), 276–298 (HECS…QKIH), 304–326 (YLCN…QRIH), 332–354 (YECS…IRIH), 360–382 (YVCK…ERIH), 388–410 (YECF…QRIH), 416–438 (HQCN…QKIH), 444–466 (YECS…QRIH), and 472–494 (YECQ…QSVH).

Belongs to the krueppel C2H2-type zinc-finger protein family.

The protein resides in the nucleus. May be involved in transcriptional regulation. In Mus musculus (Mouse), this protein is Zinc finger protein 3 (Zfp3).